The following is a 572-amino-acid chain: Urease subunit alpha (572 aa).

The region spanning A134–G572 is the Urease domain. Positions 139, 141, and 222 each coordinate Ni(2+). K222 carries the post-translational modification N6-carboxylysine. Substrate is bound at residue H224. 2 residues coordinate Ni(2+): H251 and H277. H325 serves as the catalytic Proton donor. D365 lines the Ni(2+) pocket.

The protein belongs to the metallo-dependent hydrolases superfamily. Urease alpha subunit family. In terms of assembly, heterotrimer of UreA (gamma), UreB (beta) and UreC (alpha) subunits. Three heterotrimers associate to form the active enzyme. It depends on Ni cation as a cofactor. In terms of processing, carboxylation allows a single lysine to coordinate two nickel ions.

The protein resides in the cytoplasm. It catalyses the reaction urea + 2 H2O + H(+) = hydrogencarbonate + 2 NH4(+). The protein operates within nitrogen metabolism; urea degradation; CO(2) and NH(3) from urea (urease route): step 1/1. This is Urease subunit alpha from Edwardsiella ictaluri (strain 93-146).